The chain runs to 143 residues: Cytochrome c-type biogenesis protein CcmE (143 aa).

Residues 1–8 lie on the Cytoplasmic side of the membrane; that stretch reads MTPVRRRK. Residues 9 to 29 traverse the membrane as a helical; Signal-anchor for type II membrane protein segment; it reads LFILLFALSVLSAAAALVLYA. At 30–143 the chain is on the periplasmic side; it reads LRQNISLFYT…KSALADKVKQ (114 aa). Positions 124 and 128 each coordinate heme.

The protein belongs to the CcmE/CycJ family.

The protein localises to the cell inner membrane. Functionally, heme chaperone required for the biogenesis of c-type cytochromes. Transiently binds heme delivered by CcmC and transfers the heme to apo-cytochromes in a process facilitated by CcmF and CcmH. The polypeptide is Cytochrome c-type biogenesis protein CcmE (Legionella pneumophila).